The sequence spans 264 residues: Thymidylate synthase (264 aa).

Arg21 is a binding site for dUMP. Position 51 (His51) interacts with (6R)-5,10-methylene-5,6,7,8-tetrahydrofolate. Arg126–Arg127 contacts dUMP. Cys146 acts as the Nucleophile in catalysis. Residues Arg166–Asp169, Asn177, and His207–Tyr209 contribute to the dUMP site. Asp169 is a (6R)-5,10-methylene-5,6,7,8-tetrahydrofolate binding site. Ser263 lines the (6R)-5,10-methylene-5,6,7,8-tetrahydrofolate pocket.

It belongs to the thymidylate synthase family. Bacterial-type ThyA subfamily. As to quaternary structure, homodimer.

It is found in the cytoplasm. The catalysed reaction is dUMP + (6R)-5,10-methylene-5,6,7,8-tetrahydrofolate = 7,8-dihydrofolate + dTMP. It functions in the pathway pyrimidine metabolism; dTTP biosynthesis. Catalyzes the reductive methylation of 2'-deoxyuridine-5'-monophosphate (dUMP) to 2'-deoxythymidine-5'-monophosphate (dTMP) while utilizing 5,10-methylenetetrahydrofolate (mTHF) as the methyl donor and reductant in the reaction, yielding dihydrofolate (DHF) as a by-product. This enzymatic reaction provides an intracellular de novo source of dTMP, an essential precursor for DNA biosynthesis. The protein is Thymidylate synthase of Anoxybacillus flavithermus (strain DSM 21510 / WK1).